Here is a 563-residue protein sequence, read N- to C-terminus: Probable terpene synthase 4 (563 aa).

The Mg(2+) site is built by Asp316, Asp320, and Glu469. Residues 316 to 320 (DDIFD) carry the DDXXD motif motif.

This sequence belongs to the terpene synthase family. Mg(2+) serves as cofactor.

Probable sesquiterpene synthase. The sequence is that of Probable terpene synthase 4 (TPS4) from Ricinus communis (Castor bean).